The chain runs to 1892 residues: Plexin A3 (1892 aa).

A signal peptide spans 1 to 20; that stretch reads MRSLWLLVFSFSVLTGTNMA. In terms of domain architecture, Sema spans 21–509; the sequence is FPMILSERPE…SDKQVSRLPV (489 aa). Residues 21–1240 are Extracellular-facing; it reads FPMILSERPE…IYSDSTLTLP (1220 aa). The N-linked (GlcNAc...) asparagine glycan is linked to N68. 9 cysteine pairs are disulfide-bonded: C86-C95, C121-C129, C283-C404, C299-C355, C373-C392, C512-C529, C518-C560, C521-C538, and C532-C544. Residue N569 is glycosylated (N-linked (GlcNAc...) asparagine). Residues C595 and C615 are joined by a disulfide bond. 4 IPT/TIG domains span residues 861 to 955, 957 to 1041, 1044 to 1143, and 1146 to 1232; these read PRIT…YSFV, PSFS…YIYT, PNIS…FTYY, and PTFE…LHIY. An N-linked (GlcNAc...) asparagine glycan is attached at N1183. Residues 1241-1261 traverse the membrane as a helical segment; sequence AIIGIGAGGGVLLIAIIAVLI. Positions 1262–1315 form a coiled coil; that stretch reads AYKRKTRDADRTLKRLQLQMDNLESRVALECKEAFAELQTDIQELTNDMDGVKI. The Cytoplasmic segment spans residues 1262–1892; it reads AYKRKTRDAD…QAINLMSGSS (631 aa).

This sequence belongs to the plexin family. Detected in primary motor neurons in the embryonic nervous system.

The protein resides in the cell membrane. In terms of biological role, coreceptor for class 3 semaphorins. Necessary for signaling by class 3 semaphorins and subsequent remodeling of the cytoskeleton. Plays a role in axon guidance in the developing nervous system. Class 3 semaphorins bind to a complex composed of a neuropilin and a plexin. The plexin modulates the affinity of the complex for specific semaphorins, and its cytoplasmic domain is required for the activation of down-stream signaling events in the cytoplasm. The polypeptide is Plexin A3 (plxna3) (Danio rerio (Zebrafish)).